A 741-amino-acid chain; its full sequence is MQKKRVGKSVVAALAIIAMSAGTVAAWADGAPRTNDFWWPERLDLSPLRQHDVESNPYGKDFDYAQAFNKLDIEAVKKDIRATLTTSQDWWPADYGNYGPFFIRMAWHGAGTYRTYDGRGGAGGAQQRFEPLNSWPDNANLDKARRLLWPIKKKYGENISWGDLMVLTGNVALESMGFQTFGFGGGREDDWQSDLVYWGAGTKFMSNNRDKNGKLEKPLAATQMGLIYVNPEGPNGNPDPVAAAKDIRDAFGRMAMNDEETLALIAGGHTFGKAHGAASPDKCVGAAPAGAGVEAQGLGWANKCGTGKGADTITSGLEGAWSVDPVHFTMQYLDNLLEHDWVLTKSPAGAHQWMPKDAQDIVPDAHDPSKRHPLMMFTTDIALKVDPAYSAIAKRFHAHPEEFKLAFAKAWFKLTHRDLGPKARYLGKDVPKVDLIWQDPLPVAGYQMIGDADIAELKRRILASGVPKAELIKTAWASAASFRATDYRGGANGARIRLAPENDWAVNDPASLSKVLKSLEGIQSGFNRNRTDGKQVSLADLIVLGGSAAVEDAARKAGYDVKVPFSPGRVDATQAQTDVASFAVLEPTADGFRNYYQKSNERSPAELMVDRASKLDLTVPEMTVLVGGLRALDANAGHSRLGVLTNRPGTLSNDFFVNLLDMSTQWTKSSSADGTYEGRDRKTGALKWTASPVDLVFGSSSELRAVAEVYASDDAHEKFVRDFVQAWTKVMNLDRFDLKRS.

Residues 1 to 28 (MQKKRVGKSVVAALAIIAMSAGTVAAWA) form the signal peptide. A cross-link (tryptophyl-tyrosyl-methioninium (Trp-Tyr) (with M-254)) is located at residues 107-228 (WHGAGTYRTY…LAATQMGLIY (122 aa)). The active-site Proton acceptor is the His108. The tryptophyl-tyrosyl-methioninium (Tyr-Met) (with W-107) cross-link spans 228 to 254 (YVNPEGPNGNPDPVAAAKDIRDAFGRM). Heme b is bound at residue His269.

Belongs to the peroxidase family. Peroxidase/catalase subfamily. Homodimer or homotetramer. Requires heme b as cofactor. In terms of processing, formation of the three residue Trp-Tyr-Met cross-link is important for the catalase, but not the peroxidase activity of the enzyme.

It carries out the reaction H2O2 + AH2 = A + 2 H2O. It catalyses the reaction 2 H2O2 = O2 + 2 H2O. Its function is as follows. Bifunctional enzyme with both catalase and broad-spectrum peroxidase activity. This is Catalase-peroxidase 2 from Burkholderia ambifaria (strain ATCC BAA-244 / DSM 16087 / CCUG 44356 / LMG 19182 / AMMD) (Burkholderia cepacia (strain AMMD)).